The primary structure comprises 429 residues: Enolase (429 aa).

Q167 contributes to the (2R)-2-phosphoglycerate binding site. Residue E209 is the Proton donor of the active site. 3 residues coordinate Mg(2+): D246, E289, and D316. Residues K341, R370, S371, and K392 each contribute to the (2R)-2-phosphoglycerate site. The active-site Proton acceptor is K341.

Belongs to the enolase family. As to quaternary structure, component of the RNA degradosome, a multiprotein complex involved in RNA processing and mRNA degradation. The cofactor is Mg(2+).

The protein localises to the cytoplasm. It is found in the secreted. It localises to the cell surface. It catalyses the reaction (2R)-2-phosphoglycerate = phosphoenolpyruvate + H2O. It participates in carbohydrate degradation; glycolysis; pyruvate from D-glyceraldehyde 3-phosphate: step 4/5. Its function is as follows. Catalyzes the reversible conversion of 2-phosphoglycerate (2-PG) into phosphoenolpyruvate (PEP). It is essential for the degradation of carbohydrates via glycolysis. The polypeptide is Enolase (Ectopseudomonas mendocina (strain ymp) (Pseudomonas mendocina)).